The primary structure comprises 88 residues: Cell division topological specificity factor (88 aa).

It belongs to the MinE family.

In terms of biological role, prevents the cell division inhibition by proteins MinC and MinD at internal division sites while permitting inhibition at polar sites. This ensures cell division at the proper site by restricting the formation of a division septum at the midpoint of the long axis of the cell. The sequence is that of Cell division topological specificity factor from Clostridium novyi (strain NT).